The following is a 239-amino-acid chain: Pyridoxal 5'-phosphate synthase subunit PdxS (239 aa).

D-ribose 5-phosphate is bound at residue Asp21. Residue Lys78 is the Schiff-base intermediate with D-ribose 5-phosphate of the active site. Residue Gly150 participates in D-ribose 5-phosphate binding. Residue Arg162 coordinates D-glyceraldehyde 3-phosphate. Residues Gly211 and Gly232–Ser233 contribute to the D-ribose 5-phosphate site.

It belongs to the PdxS/SNZ family. In the presence of PdxT, forms a dodecamer of heterodimers.

It catalyses the reaction aldehydo-D-ribose 5-phosphate + D-glyceraldehyde 3-phosphate + L-glutamine = pyridoxal 5'-phosphate + L-glutamate + phosphate + 3 H2O + H(+). Its pathway is cofactor biosynthesis; pyridoxal 5'-phosphate biosynthesis. Catalyzes the formation of pyridoxal 5'-phosphate from ribose 5-phosphate (RBP), glyceraldehyde 3-phosphate (G3P) and ammonia. The ammonia is provided by the PdxT subunit. Can also use ribulose 5-phosphate and dihydroxyacetone phosphate as substrates, resulting from enzyme-catalyzed isomerization of RBP and G3P, respectively. In Francisella tularensis, this protein is Pyridoxal 5'-phosphate synthase subunit PdxS.